The sequence spans 743 residues: 1,4-alpha-glucan branching enzyme GlgB (743 aa).

The active-site Nucleophile is Asp423. Glu476 functions as the Proton donor in the catalytic mechanism.

It belongs to the glycosyl hydrolase 13 family. GlgB subfamily. Monomer.

It catalyses the reaction Transfers a segment of a (1-&gt;4)-alpha-D-glucan chain to a primary hydroxy group in a similar glucan chain.. It participates in glycan biosynthesis; glycogen biosynthesis. Its function is as follows. Catalyzes the formation of the alpha-1,6-glucosidic linkages in glycogen by scission of a 1,4-alpha-linked oligosaccharide from growing alpha-1,4-glucan chains and the subsequent attachment of the oligosaccharide to the alpha-1,6 position. The chain is 1,4-alpha-glucan branching enzyme GlgB from Pseudomonas fluorescens (strain Pf0-1).